The chain runs to 107 residues: Ig kappa chain V-VI region NQ6-8.3.1 (107 aa).

The framework-1 stretch occupies residues 1-23 (QIVLTQSPAIMSASPGQKVTMTC). Cysteine 23 and cysteine 87 form a disulfide bridge. A complementarity-determining-1 region spans residues 24-33 (SASSSVSYMH). The segment at 34–48 (WYQQKSGTSPKRWIY) is framework-2. A complementarity-determining-2 region spans residues 49–55 (DTSKLAS). The tract at residues 56–87 (GXPARFSGSGSATSYSLTITSMQAEDAATYYC) is framework-3. Positions 88 to 96 (QQWSSNPLT) are complementarity-determining-3. The interval 97 to 106 (FGAGTKLELK) is framework-4.

Functionally, anti-2-phenyl oxazolone (PHOX) Antibody. The protein is Ig kappa chain V-VI region NQ6-8.3.1 of Mus musculus (Mouse).